Reading from the N-terminus, the 1033-residue chain is Potassium-transporting ATPase alpha chain 2 (1033 aa).

Over 1–96 the chain is Cytoplasmic; sequence MRRKTLEIYS…NALSPPKQTP (96 aa). A helical membrane pass occupies residues 97–117; the sequence is EIIKFLKQMIGGFSILLWVGA. Residues 118-140 are Lumenal-facing; the sequence is ILCWIAYGIQYASNQSGSLDNVY. Residues 141-161 form a helical membrane-spanning segment; the sequence is LGVVLALVVILTGIFAYYQEA. Topologically, residues 162–297 are cytoplasmic; it reads KSTNIMSSFS…NEKTPIATEI (136 aa). Residues 298-317 form a helical membrane-spanning segment; that stretch reads EHFVHIVAGVAVSIGILFFI. Topologically, residues 318 to 329 are lumenal; the sequence is IAVSLKYRVLDS. A helical transmembrane segment spans residues 330–347; it reads IIFLIGIIVANVPEGLLA. Over 348–781 the chain is Cytoplasmic; the sequence is TVTVTLSLTA…EEGRLIFDNL (434 aa). Catalysis depends on Asp-385, which acts as the 4-aspartylphosphate intermediate. Asp-726 and Asp-730 together coordinate Mg(2+). The helical transmembrane segment at 782 to 801 threads the bilayer; that stretch reads KKTIAYTLTKNIAELCPFLV. Topologically, residues 802–811 are lumenal; sequence YIIVGLPLPI. The chain crosses the membrane as a helical span at residues 812–832; that stretch reads GTITILFIDLGTDIIPSIALA. The Cytoplasmic segment spans residues 833 to 852; sequence YEKVESDIMNRKPRHKKKDR. The helical transmembrane segment at 853–875 threads the bilayer; that stretch reads LVNHQLAIYSYLHIGLMQALGAF. Topologically, residues 876 to 927 are lumenal; that stretch reads LVYFTVYAQQGFWPTSLIQLRVKWEQDYVNDLEDSYGQQWTRYQRKYLEWTG. The chain crosses the membrane as a helical span at residues 928–947; sequence YTAFFVGIMVQQIADLIIRK. At 948-961 the chain is on the cytoplasmic side; the sequence is TRRNSIFQQGLFRN. The residue at position 952 (Ser-952) is a Phosphoserine; by PKA. Residues 962–980 traverse the membrane as a helical segment; that stretch reads KVIWVGITSQIIVALILSC. At 981–995 the chain is on the lumenal side; the sequence is GLGSITALNFTMLRV. Residues 996-1016 form a helical membrane-spanning segment; sequence QYWFVAVPHAILIWVYDEVRK. The Cytoplasmic portion of the chain corresponds to 1017–1033; that stretch reads LFLRLYPGSWWDKNMYY.

It belongs to the cation transport ATPase (P-type) (TC 3.A.3) family. Type IIC subfamily. Composed of two subunits: alpha (catalytic) and beta. Found in skin, kidney and distal colon.

The protein localises to the membrane. It carries out the reaction K(+)(out) + ATP + H2O + H(+)(in) = K(+)(in) + ADP + phosphate + 2 H(+)(out). Its function is as follows. Catalyzes the hydrolysis of ATP coupled with the exchange of H(+) and K(+) ions across the plasma membrane. Responsible for potassium absorption in various tissues. In Cavia porcellus (Guinea pig), this protein is Potassium-transporting ATPase alpha chain 2 (ATP12A).